The primary structure comprises 131 residues: Profilin-6 (131 aa).

C13 and C115 are oxidised to a cystine. Positions 81 to 97 (VVIRGKKGAGGITIKKT) match the Involved in PIP2 interaction motif. The residue at position 111 (T111) is a Phosphothreonine.

It belongs to the profilin family. As to quaternary structure, occurs in many kinds of cells as a complex with monomeric actin in a 1:1 ratio. Phosphorylated by MAP kinases.

The protein resides in the cytoplasm. It is found in the cytoskeleton. In terms of biological role, binds to actin and affects the structure of the cytoskeleton. At high concentrations, profilin prevents the polymerization of actin, whereas it enhances it at low concentrations. The chain is Profilin-6 from Corylus avellana (European hazel).